The primary structure comprises 374 residues: GPN-loop GTPase 1 (374 aa).

Alanine 2 is subject to N-acetylalanine. 29–34 is a binding site for GTP; sequence GSGKTT. The Gly-Pro-Asn (GPN)-loop; involved in dimer interface signature appears at 86-88; the sequence is GPN. 189-192 lines the GTP pocket; that stretch reads NKTD. Serine 301, serine 312, and serine 314 each carry phosphoserine. A disordered region spans residues 326–354; it reads RGTLDEEDEEADSDTDDIDHRVTEESHEE. Threonine 328 carries the post-translational modification Phosphothreonine. The span at 330–342 shows a compositional bias: acidic residues; the sequence is DEEDEEADSDTDD. A Phosphoserine modification is found at serine 338. At threonine 340 the chain carries Phosphothreonine. Positions 343–354 are enriched in basic and acidic residues; sequence IDHRVTEESHEE.

Belongs to the GPN-loop GTPase family. As to quaternary structure, heterodimer with GPN3. Binds to RNA polymerase II (RNAPII). Interacts directly with RNAPII subunits RPB4 and RPB7 and the CTD of RPB1. Interacts with XPA. Expressed ubiquitously.

Its subcellular location is the cytoplasm. The protein localises to the nucleus. Functionally, small GTPase required for proper nuclear import of RNA polymerase II (RNAPII). May act at an RNAP assembly step prior to nuclear import. Forms an interface between the RNA polymerase II enzyme and chaperone/scaffolding proteins, suggesting that it is required to connect RNA polymerase II to regulators of protein complex formation. May be involved in nuclear localization of XPA. The protein is GPN-loop GTPase 1 of Homo sapiens (Human).